Reading from the N-terminus, the 178-residue chain is ATP synthase subunit delta (178 aa).

The protein belongs to the ATPase delta chain family. In terms of assembly, F-type ATPases have 2 components, F(1) - the catalytic core - and F(0) - the membrane proton channel. F(1) has five subunits: alpha(3), beta(3), gamma(1), delta(1), epsilon(1). F(0) has three main subunits: a(1), b(2) and c(10-14). The alpha and beta chains form an alternating ring which encloses part of the gamma chain. F(1) is attached to F(0) by a central stalk formed by the gamma and epsilon chains, while a peripheral stalk is formed by the delta and b chains.

The protein resides in the cell inner membrane. F(1)F(0) ATP synthase produces ATP from ADP in the presence of a proton or sodium gradient. F-type ATPases consist of two structural domains, F(1) containing the extramembraneous catalytic core and F(0) containing the membrane proton channel, linked together by a central stalk and a peripheral stalk. During catalysis, ATP synthesis in the catalytic domain of F(1) is coupled via a rotary mechanism of the central stalk subunits to proton translocation. In terms of biological role, this protein is part of the stalk that links CF(0) to CF(1). It either transmits conformational changes from CF(0) to CF(1) or is implicated in proton conduction. This chain is ATP synthase subunit delta, found in Hydrogenovibrio crunogenus (strain DSM 25203 / XCL-2) (Thiomicrospira crunogena).